Reading from the N-terminus, the 279-residue chain is NADPH-dependent 7-cyano-7-deazaguanine reductase (279 aa).

Isoleucine 86 to serine 88 lines the substrate pocket. NADPH is bound at residue serine 88–lysine 89. The active-site Thioimide intermediate is the cysteine 187. Aspartate 194 serves as the catalytic Proton donor. Position 226–227 (histidine 226–glutamate 227) interacts with substrate. Residue arginine 255–glycine 256 coordinates NADPH.

It belongs to the GTP cyclohydrolase I family. QueF type 2 subfamily. As to quaternary structure, homodimer.

The protein localises to the cytoplasm. It catalyses the reaction 7-aminomethyl-7-carbaguanine + 2 NADP(+) = 7-cyano-7-deazaguanine + 2 NADPH + 3 H(+). The protein operates within tRNA modification; tRNA-queuosine biosynthesis. Functionally, catalyzes the NADPH-dependent reduction of 7-cyano-7-deazaguanine (preQ0) to 7-aminomethyl-7-deazaguanine (preQ1). This Haemophilus influenzae (strain PittEE) protein is NADPH-dependent 7-cyano-7-deazaguanine reductase.